Reading from the N-terminus, the 458-residue chain is MSSGRIVQIIGAVIDVEFPRDVVPSVYNALKVQGAETTLEVQQQLGDGVVRTIAMGSTEGLKRGLDVVDTGAAISVPVGKATLGRIMDVLGNPIDEAGPIGEEERRGIHQPAPSFADQAGGNDLLETGIKVIDLVCPFAKGGKVGLFGGAGVGKTVNMMELIRNIAMEHSGYSVFAGVGERTREGNDFYHEMKDSNVLDKVALVYGQMNEPPGNRLRVALTGLTMAEKFRDEGNDVLLFVDNIYRYTLAGTEVSALLGRMPSAVGYQPTLAEEMGVLQERITSTKEGSITSVQAVYVPADDLTDPSPATTFAHLDATVVLSRDIASLGIYPAVDPLDSTSRQLDPNVIGNEHYETARGVQYVLQRYKELKDIIAILGMDELSEADKQLVARARKIQRFLSQPFFVAEVFTGSPGKYVSLKDTIAGFSGILKGDYDHLPEQAFYMVGSIDEAIEKAKKL.

Position 148-155 (148-155 (GGAGVGKT)) interacts with ATP.

It belongs to the ATPase alpha/beta chains family. F-type ATPases have 2 components, CF(1) - the catalytic core - and CF(0) - the membrane proton channel. CF(1) has five subunits: alpha(3), beta(3), gamma(1), delta(1), epsilon(1). CF(0) has three main subunits: a(1), b(2) and c(9-12). The alpha and beta chains form an alternating ring which encloses part of the gamma chain. CF(1) is attached to CF(0) by a central stalk formed by the gamma and epsilon chains, while a peripheral stalk is formed by the delta and b chains.

Its subcellular location is the cell inner membrane. The catalysed reaction is ATP + H2O + 4 H(+)(in) = ADP + phosphate + 5 H(+)(out). Its function is as follows. Produces ATP from ADP in the presence of a proton gradient across the membrane. The catalytic sites are hosted primarily by the beta subunits. The polypeptide is ATP synthase subunit beta (Pseudomonas putida (strain ATCC 700007 / DSM 6899 / JCM 31910 / BCRC 17059 / LMG 24140 / F1)).